The sequence spans 159 residues: Protein-export protein SecB (159 aa).

It belongs to the SecB family. In terms of assembly, homotetramer, a dimer of dimers. One homotetramer interacts with 1 SecA dimer.

Its subcellular location is the cytoplasm. One of the proteins required for the normal export of preproteins out of the cell cytoplasm. It is a molecular chaperone that binds to a subset of precursor proteins, maintaining them in a translocation-competent state. It also specifically binds to its receptor SecA. The polypeptide is Protein-export protein SecB (Marinomonas sp. (strain MWYL1)).